The chain runs to 287 residues: UTP--glucose-1-phosphate uridylyltransferase 1 (287 aa).

It belongs to the UDPGP type 2 family.

The enzyme catalyses alpha-D-glucose 1-phosphate + UTP + H(+) = UDP-alpha-D-glucose + diphosphate. It functions in the pathway glycolipid metabolism; diglucosyl-diacylglycerol biosynthesis. Its function is as follows. Catalyzes the formation of UDP-glucose from glucose-1-phosphate and UTP. This is an intermediate step in the biosynthesis of diglucosyl-diacylglycerol (Glc2-DAG), i.e. a glycolipid found in the membrane, which is also used as a membrane anchor for lipoteichoic acid (LTA). In Staphylococcus saprophyticus subsp. saprophyticus (strain ATCC 15305 / DSM 20229 / NCIMB 8711 / NCTC 7292 / S-41), this protein is UTP--glucose-1-phosphate uridylyltransferase 1 (gtaB1).